Here is a 216-residue protein sequence, read N- to C-terminus: Adenylate kinase (216 aa).

An ATP-binding site is contributed by 10–15; it reads GAGKGT. Residues 30 to 59 form an NMP region; sequence STGDMFRAAMKAETEMGLQAKSFIDKGALV. AMP-binding positions include T31, R36, 57 to 59, 85 to 88, and Q92; these read ALV and GFPR. The LID stretch occupies residues 126 to 163; the sequence is GRRICKECGATYHLEFNPPAKADVCDKCGGELYQRSDD. ATP is bound at residue R127. Zn(2+)-binding residues include C130 and C133. 136–137 lines the ATP pocket; sequence TY. Zn(2+) is bound by residues C150 and C153. Residues R160 and R171 each coordinate AMP. Residue Q199 participates in ATP binding.

Belongs to the adenylate kinase family. In terms of assembly, monomer.

It localises to the cytoplasm. The catalysed reaction is AMP + ATP = 2 ADP. Its pathway is purine metabolism; AMP biosynthesis via salvage pathway; AMP from ADP: step 1/1. Its function is as follows. Catalyzes the reversible transfer of the terminal phosphate group between ATP and AMP. Plays an important role in cellular energy homeostasis and in adenine nucleotide metabolism. The chain is Adenylate kinase from Bacillus cereus (strain ATCC 10987 / NRS 248).